A 446-amino-acid polypeptide reads, in one-letter code: Deoxyguanosinetriphosphate triphosphohydrolase-like protein (446 aa).

The disordered stretch occupies residues 1–28 (MSSSVWQERRHGEDKQRRNDHRSPFQRD). A compositionally biased stretch (basic and acidic residues) spans 7 to 28 (QERRHGEDKQRRNDHRSPFQRD). One can recognise an HD domain in the interval 59–252 (RLTHSLEVSQ…MELADDIAYA (194 aa)).

This sequence belongs to the dGTPase family. Type 2 subfamily.

In Shewanella sp. (strain MR-7), this protein is Deoxyguanosinetriphosphate triphosphohydrolase-like protein.